The sequence spans 712 residues: Transcriptional regulator GZF3 (712 aa).

Over residues 1-13 the composition is skewed to polar residues; it reads MSMSDIQQRPQIP. 5 disordered regions span residues 1–20, 27–135, 173–280, 377–533, and 596–712; these read MSMSDIQQRPQIPTTTTAAV, NVNT…GPVC, SLKT…HHHL, DVSS…GNNF, and LNNN…KVKI. 2 stretches are compositionally biased toward low complexity: residues 27-84 and 107-131; these read NVNT…EQSS and PKTGTTSSSSSTTTSSATSSKISMS. The GATA-type zinc finger occupies 135–159; it reads CGNCQTQTTPLWRRDETGQVLCNAC. A compositionally biased stretch (low complexity) spans 186–199; that stretch reads KQNGSNSQSSKSSG. Basic residues predominate over residues 213–223; sequence GKKSPKSKKKS. A compositionally biased stretch (polar residues) spans 246–261; it reads ATSNNTPTFKSTTSQS. Residues 268 to 280 show a composition bias toward basic residues; the sequence is NHHHQHHNHHHHL. Positions 379–414 are enriched in low complexity; the sequence is SSINGSSTSLSSSSASSSIFSSVAPSTSSSSSLSNG. 2 stretches are compositionally biased toward polar residues: residues 429–447 and 484–498; these read SKISSPSSQPFTRSTTPLQ and QQSMANYSQTNRSPI. Low complexity-rich tracts occupy residues 499-532 and 596-616; these read NGNQDNNNNNNNNNNNNNNGNNNGNNNSNNNGNN and LNNNGGMSSQTQPQPSQQPQQ. A coiled-coil region spans residues 545 to 598; sequence TRISELELVNDLYRTRIMELEAMEQAARLRENSMKKRLDEVMNLQINYQNLLNN. Positions 631–667 are enriched in polar residues; that stretch reads DQGSQSISPNVSITGSTTITSPNSRSKIISETTPTHH.

It is found in the nucleus. Functionally, probable transcription factor involved in response to fluconazole, LiCl, and copper. In Candida albicans (strain SC5314 / ATCC MYA-2876) (Yeast), this protein is Transcriptional regulator GZF3 (GZF3).